The chain runs to 1413 residues: Sushi, nidogen and EGF-like domain-containing protein 1 (1413 aa).

An N-terminal signal peptide occupies residues 1 to 24 (MRHGVAWALLVAAALGLGARGVRG). Positions 103-258 (AFWADVDNRR…GRWAFRIDDA (156 aa)) constitute an NIDO domain. Residues Asn-145 and Asn-204 are each glycosylated (N-linked (GlcNAc...) asparagine). 3 EGF-like domains span residues 268-309 (TTSV…RRCH), 311-347 (DVNECASQPCQNGGTCTHGINSFRCQCPAGFGGPTCE), and 349-385 (AQSPCDTKECQHGGQCQVENGSAVCVCQAGYTGAACE). Intrachain disulfides connect Cys-272-Cys-284, Cys-278-Cys-297, Cys-299-Cys-308, Cys-315-Cys-326, Cys-320-Cys-335, Cys-337-Cys-346, Cys-353-Cys-364, Cys-358-Cys-373, Cys-375-Cys-384, Cys-391-Cys-402, Cys-396-Cys-411, Cys-413-Cys-422, Cys-433-Cys-444, Cys-438-Cys-453, Cys-455-Cys-464, Cys-472-Cys-480, Cys-474-Cys-488, and Cys-490-Cys-499. N-linked (GlcNAc...) asparagine glycosylation occurs at Asn-292. One can recognise a Follistatin-like 1 domain in the interval 352–374 (PCDTKECQHGGQCQVENGSAVCV). Asn-368 carries N-linked (GlcNAc...) asparagine glycosylation. Positions 387-423 (DVDDCSPDPCLNGGSCVDLVGNYTCLCAEPFKGLRCE) constitute an EGF-like 4; calcium-binding domain. Asn-408 is a glycosylation site (N-linked (GlcNAc...) asparagine). 2 consecutive EGF-like domains span residues 429 to 465 (VPDACLSAPCHNGGTCVDADQGYVCECPEGFMGLDCR) and 468 to 500 (VPDDCECRNGGRCLGANTTLCQCPLGFFGLLCE). Residue Asn-484 is glycosylated (N-linked (GlcNAc...) asparagine). Positions 507–530 (PCNMNTQCPDGGYCMEHGGSYLCV) constitute a Follistatin-like 2 domain. N-linked (GlcNAc...) asparagine glycosylation is present at Asn-536. EGF-like domains follow at residues 541-577 (LPSPCDSDPCFNGGSCDAHDDSYTCECPRGFHGKHCE), 580-616 (RPHLCSSGPCRNGGTCKEAGGEYHCSCPYRFTGRHCE), 619-655 (KPDSCASGPCHNGGTCFHYIGKYKCDCPPGFSGRHCE), and 657-693 (APSPCFRSPCVNGGTCEDRDTDFFCHCQAGYMGRRCQ). Disulfide bonds link Cys-545/Cys-556, Cys-550/Cys-565, Cys-567/Cys-576, Cys-584/Cys-595, Cys-589/Cys-604, Cys-606/Cys-615, Cys-623/Cys-634, Cys-628/Cys-643, Cys-645/Cys-654, Cys-661/Cys-672, Cys-666/Cys-681, Cys-683/Cys-692, Cys-698/Cys-739, Cys-724/Cys-751, Cys-757/Cys-768, Cys-762/Cys-777, Cys-779/Cys-788, Cys-795/Cys-806, Cys-800/Cys-815, Cys-817/Cys-826, Cys-833/Cys-844, Cys-838/Cys-853, Cys-855/Cys-864, Cys-871/Cys-882, Cys-876/Cys-891, and Cys-893/Cys-902. Residues 696–753 (VDCGPPEEVKHATLRFNGTRLGAVALYACDRGYSLSAPSRIRVCQPHGVWSEPPQCLE) form the Sushi domain. An N-linked (GlcNAc...) asparagine glycan is attached at Asn-712. The EGF-like 11; calcium-binding domain occupies 753–789 (EIDECRSQPCLHGGSCQDRVAGYLCLCSTGYEGAHCE). An EGF-like 12; calcium-binding domain is found at 791–827 (ERDECRAHPCRNGGSCRNLPGAYVCRCPAGFVGVHCE). EGF-like domains lie at 829–865 (EVDACDSSPCQHGGRCESGGGAYLCVCPESFFGYHCE) and 867–903 (VSDPCFSSPCGGRGYCLASNGSHSCTCKVGYTGEDCA). Residue Asn-886 is glycosylated (N-linked (GlcNAc...) asparagine). 3 Fibronectin type-III domains span residues 908-1006 (PPTA…TRPR), 1007-1105 (PVEG…TRPL), and 1106-1200 (PPAN…SPRD). Residues Asn-977, Asn-1015, Asn-1109, and Asn-1139 are each glycosylated (N-linked (GlcNAc...) asparagine). The disordered stretch occupies residues 1206 to 1226 (WHQGGHHPRVLKNRPPPARLP). Over residues 1207-1217 (HQGGHHPRVLK) the composition is skewed to basic residues. Residues 1307–1343 (VPGNCSENPCQNGGTCVPGADAHSCDCGPGFKGRRCE) form the EGF-like 15 domain. A glycan (N-linked (GlcNAc...) asparagine) is linked at Asn-1310. 3 disulfides stabilise this stretch: Cys-1311–Cys-1322, Cys-1316–Cys-1331, and Cys-1333–Cys-1342. The interval 1394 to 1413 (TSLKKTPNRKQSKSQTLEKS) is disordered.

Post-translationally, phosphorylated on serine and threonine residues. In terms of processing, N-glycosylated.

The protein resides in the secreted. It is found in the extracellular space. The protein localises to the extracellular matrix. The polypeptide is Sushi, nidogen and EGF-like domain-containing protein 1 (Homo sapiens (Human)).